The sequence spans 662 residues: Glycogen debranching enzyme (662 aa).

Aspartate 338 functions as the Nucleophile in the catalytic mechanism. Glutamate 373 serves as the catalytic Proton donor.

It belongs to the glycosyl hydrolase 13 family.

The enzyme catalyses Hydrolysis of (1-&gt;6)-alpha-D-glucosidic linkages to branches with degrees of polymerization of three or four glucose residues in limit dextrin.. It functions in the pathway glycan degradation; glycogen degradation. Its function is as follows. Removes maltotriose and maltotetraose chains that are attached by 1,6-alpha-linkage to the limit dextrin main chain, generating a debranched limit dextrin. The sequence is that of Glycogen debranching enzyme from Yersinia pestis.